Consider the following 248-residue polypeptide: Homeobox protein BarH-like 1 (248 aa).

The segment at residues 135-194 (GRRSRTVFTELQLMGLEKRFEKQKYLSTPDRIDLAESLGLSQLQVKTWYQNRRMKWKKIV) is a DNA-binding region (homeobox). The segment at 197–248 (GGGLESPTKPKGRPKKNSIPTSEQLSEQERTREADRLSDGGASSLSDANQEE) is disordered. Residues 223–234 (EQERTREADRLS) show a composition bias toward basic and acidic residues. Residues 237-248 (GASSLSDANQEE) show a composition bias toward polar residues.

Belongs to the BAR homeobox family.

It is found in the nucleus. Transcription factor, is involved in craniofacial development, and in stomach organogenesis. This is Homeobox protein BarH-like 1 (barx1) from Danio rerio (Zebrafish).